A 332-amino-acid chain; its full sequence is Mitotic spindle assembly checkpoint protein MAD2B (332 aa).

The HORMA domain maps to 4 to 332 (EHFCDCIGEF…RTFTEQSITK (329 aa)). 2 disordered regions span residues 181-204 (KTQQ…NGFI) and 225-244 (KSNQ…GDKD). The segment covering 230 to 244 (NKKEDNDDNNNGDKD) has biased composition (basic and acidic residues).

Belongs to the MAD2 family.

The protein localises to the nucleus. In terms of biological role, adapter protein able to interact with different proteins and involved in different biological processes. This is Mitotic spindle assembly checkpoint protein MAD2B (mad2l2) from Dictyostelium discoideum (Social amoeba).